A 263-amino-acid chain; its full sequence is 4-hydroxy-tetrahydrodipicolinate reductase (263 aa).

NAD(+)-binding positions include 7–12 (GFKGRM), 96–98 (GTT), and 122–125 (APNF). The Proton donor/acceptor role is filled by H152. Residue H153 participates in (S)-2,3,4,5-tetrahydrodipicolinate binding. K156 acts as the Proton donor in catalysis. 162–163 (GT) provides a ligand contact to (S)-2,3,4,5-tetrahydrodipicolinate.

Belongs to the DapB family.

It localises to the cytoplasm. The enzyme catalyses (S)-2,3,4,5-tetrahydrodipicolinate + NAD(+) + H2O = (2S,4S)-4-hydroxy-2,3,4,5-tetrahydrodipicolinate + NADH + H(+). It catalyses the reaction (S)-2,3,4,5-tetrahydrodipicolinate + NADP(+) + H2O = (2S,4S)-4-hydroxy-2,3,4,5-tetrahydrodipicolinate + NADPH + H(+). The protein operates within amino-acid biosynthesis; L-lysine biosynthesis via DAP pathway; (S)-tetrahydrodipicolinate from L-aspartate: step 4/4. Its function is as follows. Catalyzes the conversion of 4-hydroxy-tetrahydrodipicolinate (HTPA) to tetrahydrodipicolinate. In Listeria monocytogenes serotype 4b (strain F2365), this protein is 4-hydroxy-tetrahydrodipicolinate reductase.